Reading from the N-terminus, the 250-residue chain is tRNA-splicing endonuclease subunit Sen2-2 (250 aa).

Active-site residues include Tyr148, His156, and Lys189. A disordered region spans residues 225-250; that stretch reads SPELSREDQSTNSKQHVPNVSNLNTL. The span at 234–250 shows a compositional bias: polar residues; it reads STNSKQHVPNVSNLNTL.

This sequence belongs to the tRNA-intron endonuclease family. As to quaternary structure, tRNA splicing endonuclease is a heterotetramer composed of SEN2, SEN15, SEN34/LENG5 and SEN54.

The protein resides in the nucleus. The enzyme catalyses pretRNA = a 3'-half-tRNA molecule with a 5'-OH end + a 5'-half-tRNA molecule with a 2',3'-cyclic phosphate end + an intron with a 2',3'-cyclic phosphate and a 5'-hydroxyl terminus.. Constitutes one of the two catalytic subunit of the tRNA-splicing endonuclease complex, a complex responsible for identification and cleavage of the splice sites in pre-tRNA. It cleaves pre-tRNA at the 5'- and 3'-splice sites to release the intron. The products are an intron and two tRNA half-molecules bearing 2',3'-cyclic phosphate and 5'-OH termini. There are no conserved sequences at the splice sites, but the intron is invariably located at the same site in the gene, placing the splice sites an invariant distance from the constant structural features of the tRNA body. Probably carries the active site for 5'-splice site cleavage. This Arabidopsis thaliana (Mouse-ear cress) protein is tRNA-splicing endonuclease subunit Sen2-2 (SEN2).